Reading from the N-terminus, the 425-residue chain is Pre-mRNA-splicing factor PRP46 (425 aa).

WD repeat units follow at residues 111-151, 154-193, 196-235, 238-279, 281-320, 322-360, and 371-410; these read GHTG…LKVT, GHIM…VVRD, GTLS…CVLT, GHRG…KTLT, HKRN…TNFN, EALG…KFQK, and ESEK…TQDS.

Belongs to the WD repeat PRL1/PRL2 family. In terms of assembly, associated with the spliceosome.

The protein resides in the cytoplasm. It is found in the nucleus. Functionally, involved in pre-mRNA splicing and required for cell cycle progression at G2/M. This Eremothecium gossypii (strain ATCC 10895 / CBS 109.51 / FGSC 9923 / NRRL Y-1056) (Yeast) protein is Pre-mRNA-splicing factor PRP46 (PRP46).